We begin with the raw amino-acid sequence, 278 residues long: Dermonecrotic toxin LspiSicTox-betaIE2ii (278 aa).

His5 is a catalytic residue. Mg(2+)-binding residues include Glu25 and Asp27. His41 acts as the Nucleophile in catalysis. 2 disulfide bridges follow: Cys45-Cys51 and Cys47-Cys190. Asp85 contacts Mg(2+).

The protein belongs to the arthropod phospholipase D family. Class II subfamily. Mg(2+) is required as a cofactor. Expressed by the venom gland.

It is found in the secreted. It catalyses the reaction an N-(acyl)-sphingosylphosphocholine = an N-(acyl)-sphingosyl-1,3-cyclic phosphate + choline. The enzyme catalyses an N-(acyl)-sphingosylphosphoethanolamine = an N-(acyl)-sphingosyl-1,3-cyclic phosphate + ethanolamine. The catalysed reaction is a 1-acyl-sn-glycero-3-phosphocholine = a 1-acyl-sn-glycero-2,3-cyclic phosphate + choline. It carries out the reaction a 1-acyl-sn-glycero-3-phosphoethanolamine = a 1-acyl-sn-glycero-2,3-cyclic phosphate + ethanolamine. Functionally, dermonecrotic toxins cleave the phosphodiester linkage between the phosphate and headgroup of certain phospholipids (sphingolipid and lysolipid substrates), forming an alcohol (often choline) and a cyclic phosphate. This toxin acts on sphingomyelin (SM). It may also act on ceramide phosphoethanolamine (CPE), lysophosphatidylcholine (LPC) and lysophosphatidylethanolamine (LPE), but not on lysophosphatidylserine (LPS), and lysophosphatidylglycerol (LPG). It acts by transphosphatidylation, releasing exclusively cyclic phosphate products as second products. Induces dermonecrosis, hemolysis, increased vascular permeability, edema, inflammatory response, and platelet aggregation. This chain is Dermonecrotic toxin LspiSicTox-betaIE2ii, found in Loxosceles spinulosa (Recluse spider).